Here is a 217-residue protein sequence, read N- to C-terminus: Large ribosomal subunit protein uL4c (217 aa).

Positions 51–85 (HRNRNAHTQTRGEVSGGGRKPWKQKGTGRARAGSN) are disordered.

It belongs to the universal ribosomal protein uL4 family. In terms of assembly, part of the 50S ribosomal subunit.

It is found in the plastid. Its subcellular location is the chloroplast. Functionally, probably binds the 23S rRNA. The chain is Large ribosomal subunit protein uL4c (rpl4) from Gracilaria tenuistipitata var. liui (Red alga).